Here is a 323-residue protein sequence, read N- to C-terminus: Probable pectate lyase A (323 aa).

Positions 1–20 are cleaved as a signal peptide; sequence MTNFKWIVAAAGLLSGQVLA. Asn-95 carries an N-linked (GlcNAc...) asparagine glycan. Residues Asp-136, Asp-165, and Asp-169 each contribute to the Ca(2+) site. Arg-222 is a catalytic residue.

This sequence belongs to the polysaccharide lyase 1 family. The cofactor is Ca(2+).

Its subcellular location is the secreted. The enzyme catalyses Eliminative cleavage of (1-&gt;4)-alpha-D-galacturonan to give oligosaccharides with 4-deoxy-alpha-D-galact-4-enuronosyl groups at their non-reducing ends.. Functionally, pectinolytic enzyme consist of four classes of enzymes: pectin lyase, polygalacturonase, pectin methylesterase and rhamnogalacturonase. Among pectinolytic enzymes, pectin lyase is the most important in depolymerization of pectin, since it cleaves internal glycosidic bonds of highly methylated pectins. Favors pectate, the anion, over pectin, the methyl ester. In Aspergillus niger (strain ATCC MYA-4892 / CBS 513.88 / FGSC A1513), this protein is Probable pectate lyase A (plyA).